Consider the following 258-residue polypeptide: Imidazole glycerol phosphate synthase subunit HisF (258 aa).

Active-site residues include D11 and D130.

This sequence belongs to the HisA/HisF family. In terms of assembly, heterodimer of HisH and HisF.

The protein resides in the cytoplasm. The enzyme catalyses 5-[(5-phospho-1-deoxy-D-ribulos-1-ylimino)methylamino]-1-(5-phospho-beta-D-ribosyl)imidazole-4-carboxamide + L-glutamine = D-erythro-1-(imidazol-4-yl)glycerol 3-phosphate + 5-amino-1-(5-phospho-beta-D-ribosyl)imidazole-4-carboxamide + L-glutamate + H(+). It participates in amino-acid biosynthesis; L-histidine biosynthesis; L-histidine from 5-phospho-alpha-D-ribose 1-diphosphate: step 5/9. IGPS catalyzes the conversion of PRFAR and glutamine to IGP, AICAR and glutamate. The HisF subunit catalyzes the cyclization activity that produces IGP and AICAR from PRFAR using the ammonia provided by the HisH subunit. In Blochmanniella floridana, this protein is Imidazole glycerol phosphate synthase subunit HisF.